Consider the following 150-residue polypeptide: Putative transmembrane protein DDB_G0277665 (150 aa).

Transmembrane regions (helical) follow at residues 4-24 (TLII…FNIL) and 42-62 (VIVG…FLPL).

It is found in the membrane. The protein is Putative transmembrane protein DDB_G0277665 of Dictyostelium discoideum (Social amoeba).